We begin with the raw amino-acid sequence, 93 residues long: Cobalt transport protein CbiN (93 aa).

A run of 2 helical transmembrane segments spans residues 5 to 25 and 62 to 82; these read LILLAMVIALVILPFFIDHGG and SLLFTLQGSLGAAVIFYILGY.

Belongs to the CbiN family. As to quaternary structure, forms an energy-coupling factor (ECF) transporter complex composed of an ATP-binding protein (A component, CbiO), a transmembrane protein (T component, CbiQ) and 2 possible substrate-capture proteins (S components, CbiM and CbiN) of unknown stoichimetry.

Its subcellular location is the cell inner membrane. It participates in cofactor biosynthesis; adenosylcobalamin biosynthesis. Functionally, part of the energy-coupling factor (ECF) transporter complex CbiMNOQ involved in cobalt import. The polypeptide is Cobalt transport protein CbiN (Citrobacter koseri (strain ATCC BAA-895 / CDC 4225-83 / SGSC4696)).